Here is a 161-residue protein sequence, read N- to C-terminus: Type IV major fimbrial protein FimA (161 aa).

Positions 1-7 are cleaved as a propeptide — leader sequence; it reads MKSLQKG. Residue phenylalanine 8 is modified to N-methylphenylalanine. A helical membrane pass occupies residues 8–28; sequence FTLIELMIVVAIIGILAAFAI. An intrachain disulfide couples cysteine 63 to cysteine 105.

This sequence belongs to the N-Me-Phe pilin family. As to quaternary structure, the pili are polar flexible filaments of about 5.4 nanometers diameter and 2.5 micrometers average length; they consist of only a single polypeptide chain arranged in a helical configuration of five subunits per turn in the assembled pilus.

The protein resides in the fimbrium. The protein localises to the membrane. Functionally, major component of the type IV fimbriae that plays an essential role in twitching motility, natural transformation, and protease secretion. The chain is Type IV major fimbrial protein FimA (fimA) from Dichelobacter nodosus (Bacteroides nodosus).